The chain runs to 299 residues: Acetylglutamate kinase (299 aa).

Substrate is bound by residues Gly-72 to Gly-73, Arg-94, and Asn-196.

Belongs to the acetylglutamate kinase family. ArgB subfamily.

Its subcellular location is the cytoplasm. It carries out the reaction N-acetyl-L-glutamate + ATP = N-acetyl-L-glutamyl 5-phosphate + ADP. It functions in the pathway amino-acid biosynthesis; L-arginine biosynthesis; N(2)-acetyl-L-ornithine from L-glutamate: step 2/4. In terms of biological role, catalyzes the ATP-dependent phosphorylation of N-acetyl-L-glutamate. The protein is Acetylglutamate kinase of Burkholderia cenocepacia (strain HI2424).